A 329-amino-acid chain; its full sequence is ATPase ASNA1 homolog 1 (329 aa).

26-33 (KGGVGKTT) contacts ATP. Aspartate 55 is an active-site residue. Positions 235 and 262 each coordinate ATP. Residues cysteine 271 and cysteine 274 each contribute to the Zn(2+) site.

The protein belongs to the arsA ATPase family. As to quaternary structure, homodimer.

Its subcellular location is the cytoplasm. It localises to the endoplasmic reticulum. In terms of biological role, ATPase required for the post-translational delivery of tail-anchored (TA) proteins to the endoplasmic reticulum. Recognizes and selectively binds the transmembrane domain of TA proteins in the cytosol. This complex then targets to the endoplasmic reticulum by membrane-bound receptors, where the tail-anchored protein is released for insertion. This process is regulated by ATP binding and hydrolysis. ATP binding drives the homodimer towards the closed dimer state, facilitating recognition of newly synthesized TA membrane proteins. ATP hydrolysis is required for insertion. Subsequently, the homodimer reverts towards the open dimer state, lowering its affinity for the membrane-bound receptor, and returning it to the cytosol to initiate a new round of targeting. The protein is ATPase ASNA1 homolog 1 of Paramecium tetraurelia.